The following is a 382-amino-acid chain: Sialidase (382 aa).

Position 37 (R37) interacts with substrate. An intrachain disulfide couples C42 to C103. D62 (proton acceptor) is an active-site residue. BNR repeat units follow at residues 71–82 (ARSTDGGKTWNK), 145–156 (YKSTDDGVTFSK), and 210–220 (IYSTDGITWSL). A substrate-binding site is contributed by R246. The stretch at 254–265 (FETKDFGKTWTE) is one BNR 4 repeat. R309 contributes to the substrate binding site. Catalysis depends on Y342, which acts as the Nucleophile. Residue E361 is part of the active site.

Belongs to the glycosyl hydrolase 33 family. Monomer.

It carries out the reaction Hydrolysis of alpha-(2-&gt;3)-, alpha-(2-&gt;6)-, alpha-(2-&gt;8)- glycosidic linkages of terminal sialic acid residues in oligosaccharides, glycoproteins, glycolipids, colominic acid and synthetic substrates.. Functionally, cleaves the terminal sialic acid (N-acetyl neuraminic acid) from carbohydrate chains in glycoproteins providing free sialic acid which can be used as carbon and energy sources. Sialidases have been suggested to be pathogenic factors in microbial infections. This Salmonella typhimurium (strain LT2 / SGSC1412 / ATCC 700720) protein is Sialidase (nanH).